A 113-amino-acid chain; its full sequence is Large ribosomal subunit protein bL19 (113 aa).

This sequence belongs to the bacterial ribosomal protein bL19 family.

Its function is as follows. This protein is located at the 30S-50S ribosomal subunit interface and may play a role in the structure and function of the aminoacyl-tRNA binding site. The chain is Large ribosomal subunit protein bL19 from Desulfitobacterium hafniense (strain DSM 10664 / DCB-2).